Consider the following 186-residue polypeptide: Probable chorismate pyruvate-lyase (186 aa).

Substrate contacts are provided by R80, L118, and E170.

Belongs to the UbiC family.

It is found in the cytoplasm. It catalyses the reaction chorismate = 4-hydroxybenzoate + pyruvate. It participates in cofactor biosynthesis; ubiquinone biosynthesis. In terms of biological role, removes the pyruvyl group from chorismate, with concomitant aromatization of the ring, to provide 4-hydroxybenzoate (4HB) for the ubiquinone pathway. The polypeptide is Probable chorismate pyruvate-lyase (Pseudomonas syringae pv. syringae (strain B728a)).